The primary structure comprises 399 residues: Leu/Ile/Val-binding protein homolog 7 (399 aa).

Positions 1–22 (MEKHLIALSVAALLAGAAPASA) are cleaved as a signal peptide.

The protein belongs to the leucine-binding protein family.

In terms of biological role, component of an amino-acid transport system. The protein is Leu/Ile/Val-binding protein homolog 7 of Brucella melitensis biotype 1 (strain ATCC 23456 / CCUG 17765 / NCTC 10094 / 16M).